The primary structure comprises 784 residues: Toll-like receptor 2 (784 aa).

Residues 1 to 20 form the signal peptide; that stretch reads MPRALWTAWVWAVIILSTEG. Topologically, residues 21 to 587 are extracellular; the sequence is ASDQASSLSC…ARLSLSECHR (567 aa). The cysteines at positions 30 and 36 are disulfide-linked. LRR repeat units follow at residues 54-77, 78-101, 102-125, 126-150, 151-175, 176-199, 200-223, 224-250, 251-278, 279-308, 309-337, 338-361, 362-388, 389-414, 415-437, 438-457, 458-478, 479-500, and 501-524; these read VKSLDLSNNDITYVGNRDLQRCVN, LKTLRLGANEIHTVEEDSFFHLRN, LEYLDLSYNRLSNLSSSWFRSLYV, LKFLNLLGNLYKTLGETSLFSHLPN, LRTLKVGNSNSFTEIHEKDFTGLTF, LEELEISAQNLQIYVPKSLKSIQN, ISHLILHLKQPILLVDILVDIVSS, LDCFELRDTNLHTFHFSEASISEMSTS, VKKLIFRNVQFTDESFVEVVKLFNYVSG, ILEVEFDDCTHDGIGDFRALSLDRIRHLGN, VETLTIRKLHIPQFFLFHDLSSIYPLTGR, VKRVTIENSKVFLVPCLLSQHLKS, LEYLDLSENLMSEETLKNSACKDAWPF, LQTLVLRQNRLKSLEKTGELLLTLEN, LNNLDISKNNFLSMPETCQWPGK, MKQLNLSSTRIHSLTQCLPQ, TLEILDVSNNNLDSFSLILPQ, LKELYISRNKLKTLPDASFLPV, and LSVMRISRNIINTFSKEQLDSFQQ. N114 is a glycosylation site (N-linked (GlcNAc...) asparagine). A glycan (N-linked (GlcNAc...) asparagine) is linked at N199. A disulfide bridge connects residues C353 and C382. C432 and C454 form a disulfide bridge. N442 carries an N-linked (GlcNAc...) asparagine glycan. Residues 525–579 enclose the LRRCT domain; sequence LKTLEAGGNNFICSCDFLSFTQGQQALGRVLVDWPDDYRCDSPSHVRGQRVQDAR. Residues 588–608 form a helical membrane-spanning segment; sequence AAVVSAACCALFLLLLLTGVL. At 609–784 the chain is on the cytoplasmic side; sequence CHRFHGLWYM…WLNLRAAIRS (176 aa). Residues 639 to 782 form the TIR domain; sequence ICYDAFVSYS…GFWLNLRAAI (144 aa). Residue K754 forms a Glycyl lysine isopeptide (Lys-Gly) (interchain with G-Cter in ubiquitin) linkage. Residues 761 to 778 carry the ATG16L1-binding motif motif; the sequence is YLEWPVDETQQEGFWLNL.

It belongs to the Toll-like receptor family. In terms of assembly, interacts with LY96, TLR1 and TLR6 (via extracellular domain). TLR2 seems to exist in heterodimers with either TLR1 or TLR6 before stimulation by the ligand. The heterodimers form bigger oligomers in response to their corresponding ligands as well as further heterotypic associations with other receptors such as CD14 and/or CD36. Binds MYD88 (via TIR domain). Interacts with TICAM1. Interacts with CNPY3. Interacts with ATG16L1. Interacts with PPP1R11. Interacts with TICAM2. Interacts with TIRAP. Post-translationally, ubiquitinated at Lys-754 by PPP1R11, leading to its degradation. Deubiquitinated by USP2. In terms of processing, glycosylation of Asn-442 is critical for secretion of the N-terminal ectodomain of TLR2.

It localises to the membrane. Its subcellular location is the cytoplasmic vesicle. The protein resides in the phagosome membrane. The protein localises to the membrane raft. In terms of biological role, cooperates with LY96 to mediate the innate immune response to bacterial lipoproteins and other microbial cell wall components. Cooperates with TLR1 or TLR6 to mediate the innate immune response to bacterial lipoproteins or lipopeptides. Acts via MYD88 and TRAF6, leading to NF-kappa-B activation, cytokine secretion and the inflammatory response. May also promote apoptosis in response to lipoproteins. Forms activation clusters composed of several receptors depending on the ligand, these clusters trigger signaling from the cell surface and subsequently are targeted to the Golgi in a lipid-raft dependent pathway. Forms the cluster TLR2:TLR6:CD14:CD36 in response to diacylated lipopeptides and TLR2:TLR1:CD14 in response to triacylated lipopeptides. This chain is Toll-like receptor 2 (TLR2), found in Bos taurus (Bovine).